An 87-amino-acid polypeptide reads, in one-letter code: UPF0237 protein YjhC (87 aa).

One can recognise an ACT domain in the interval 4–76 (VVTVVGADKI…EALGVNIHVQ (73 aa)).

Belongs to the UPF0237 family.

The polypeptide is UPF0237 protein YjhC (yjhC) (Lactococcus lactis subsp. lactis (strain IL1403) (Streptococcus lactis)).